The sequence spans 131 residues: Profilin-2 (131 aa).

Cysteines 13 and 115 form a disulfide. The Involved in PIP2 interaction signature appears at 81–97 (AVIRGKKGPGGVTVKKT). Thr-111 is modified (phosphothreonine).

It belongs to the profilin family. As to quaternary structure, multimer. Occurs in many kinds of cells as a complex with monomeric actin in a 1:1 ratio. Post-translationally, phosphorylated by MAP kinases.

Its subcellular location is the cytoplasm. The protein resides in the cytoskeleton. Functionally, binds to actin and affects the structure of the cytoskeleton. At high concentrations, profilin prevents the polymerization of actin, whereas it enhances it at low concentrations. By binding to PIP2, it inhibits the formation of IP3 and DG. The chain is Profilin-2 from Hevea brasiliensis (Para rubber tree).